The following is a 134-amino-acid chain: UPF0412 protein YaaI (134 aa).

An N-terminal signal peptide occupies residues 1–23 (MRSVLTISAGLLFGLALSSVAHA).

This sequence belongs to the UPF0412 family.

This Salmonella agona (strain SL483) protein is UPF0412 protein YaaI.